The chain runs to 356 residues: Dynein axonemal heavy chain 12 (356 aa).

6 ANK repeats span residues 17-46 (DSSS…DANV), 50-81 (SGHL…AIKR), 82-111 (SGIS…DVNF), 124-153 (HRKS…MPNQ), 154-183 (DPVN…NVNY), and 185-218 (CRVN…DTEL). The region spanning 290–345 (WSEIHFILTNPRSLKHLCRLKIRKCMGRLRLRCPVFMSFLPLPSRLKAYVLYKEYD) is the SOCS box domain.

Belongs to the dynein heavy chain family. As to quaternary structure, consists of at least two heavy chains and a number of intermediate and light chains.

The protein localises to the cytoplasm. It localises to the cytoskeleton. Its subcellular location is the cilium axoneme. It functions in the pathway protein modification; protein ubiquitination. Functionally, force generating protein of respiratory cilia. Produces force towards the minus ends of microtubules. Dynein has ATPase activity; the force-producing power stroke is thought to occur on release of ADP. Involved in sperm motility; implicated in sperm flagellar assembly. May be a substrate-recognition component of a SCF-like ECS (Elongin-Cullin-SOCS-box protein) E3 ubiquitin-protein ligase complex which mediates the ubiquitination and subsequent proteasomal degradation of target proteins. This chain is Dynein axonemal heavy chain 12 (DNAH12), found in Bos taurus (Bovine).